Here is a 465-residue protein sequence, read N- to C-terminus: Cysteine--tRNA ligase (465 aa).

Residue cysteine 27 coordinates Zn(2+). Positions proline 29–histidine 39 match the 'HIGH' region motif. Residues cysteine 207, histidine 237, and glutamate 241 each coordinate Zn(2+). The 'KMSKS' region signature appears at lysine 269 to serine 273. Lysine 272 is a binding site for ATP.

This sequence belongs to the class-I aminoacyl-tRNA synthetase family. In terms of assembly, monomer. The cofactor is Zn(2+).

Its subcellular location is the cytoplasm. The catalysed reaction is tRNA(Cys) + L-cysteine + ATP = L-cysteinyl-tRNA(Cys) + AMP + diphosphate. The chain is Cysteine--tRNA ligase from Helicobacter pylori (strain G27).